The primary structure comprises 88 residues: Small ribosomal subunit protein uS17 (88 aa).

Belongs to the universal ribosomal protein uS17 family. In terms of assembly, part of the 30S ribosomal subunit.

Its function is as follows. One of the primary rRNA binding proteins, it binds specifically to the 5'-end of 16S ribosomal RNA. This chain is Small ribosomal subunit protein uS17, found in Prochlorococcus marinus (strain MIT 9303).